The chain runs to 485 residues: 4-alpha-glucanotransferase (485 aa).

This sequence belongs to the disproportionating enzyme family.

Its subcellular location is the cytoplasm. The enzyme catalyses Transfers a segment of a (1-&gt;4)-alpha-D-glucan to a new position in an acceptor, which may be glucose or a (1-&gt;4)-alpha-D-glucan.. This chain is 4-alpha-glucanotransferase (malQ), found in Aquifex aeolicus (strain VF5).